A 262-amino-acid polypeptide reads, in one-letter code: ATP synthase subunit a (262 aa).

5 consecutive transmembrane segments (helical) span residues 24–44 (AVHL…LVVF), 85–105 (IAPL…IDLV), 129–149 (DISA…FYTV), 194–214 (LFGN…MYMA), and 228–248 (LVWA…FMML).

The protein belongs to the ATPase A chain family. F-type ATPases have 2 components, CF(1) - the catalytic core - and CF(0) - the membrane proton channel. CF(1) has five subunits: alpha(3), beta(3), gamma(1), delta(1), epsilon(1). CF(0) has three main subunits: a(1), b(2) and c(9-12). The alpha and beta chains form an alternating ring which encloses part of the gamma chain. CF(1) is attached to CF(0) by a central stalk formed by the gamma and epsilon chains, while a peripheral stalk is formed by the delta and b chains.

Its subcellular location is the cell inner membrane. In terms of biological role, key component of the proton channel; it plays a direct role in the translocation of protons across the membrane. This chain is ATP synthase subunit a, found in Haemophilus ducreyi (strain 35000HP / ATCC 700724).